An 88-amino-acid chain; its full sequence is U-scoloptoxin(XY)-Er1a (88 aa).

The first 24 residues, M1–S24, serve as a signal peptide directing secretion. Positions R66–A88 are disordered. A propeptide spanning residues E79 to A88 is cleaved from the precursor.

The protein belongs to the scoloptoxin-XY family. In terms of processing, contains 3 disulfide bonds. In terms of tissue distribution, expressed by the venom gland.

Its subcellular location is the secreted. The polypeptide is U-scoloptoxin(XY)-Er1a (Ethmostigmus rubripes (Giant centipede)).